Here is a 688-residue protein sequence, read N- to C-terminus: Methionine--tRNA ligase (688 aa).

A 'HIGH' region motif is present at residues 13 to 23; sequence PYANGNFHIGH. The Zn(2+) site is built by C144, C147, C157, and C160. A 'KMSKS' region motif is present at residues 342 to 346; it reads KMSKS. ATP is bound at residue K345. The region spanning 582–688 is the tRNA-binding domain; the sequence is DFAKVDLRIA…PGAQPGMRIH (107 aa).

Belongs to the class-I aminoacyl-tRNA synthetase family. MetG type 1 subfamily. Homodimer. Zn(2+) serves as cofactor.

It is found in the cytoplasm. It catalyses the reaction tRNA(Met) + L-methionine + ATP = L-methionyl-tRNA(Met) + AMP + diphosphate. Its function is as follows. Is required not only for elongation of protein synthesis but also for the initiation of all mRNA translation through initiator tRNA(fMet) aminoacylation. This Acidovorax sp. (strain JS42) protein is Methionine--tRNA ligase.